A 42-amino-acid polypeptide reads, in one-letter code: Conotoxin Au11.6 (42 aa).

4 cysteine pairs are disulfide-bonded: Cys-6/Cys-20, Cys-13/Cys-25, Cys-19/Cys-30, and Cys-24/Cys-37.

It belongs to the conotoxin I1 superfamily. As to expression, expressed by the venom duct.

The protein resides in the secreted. The polypeptide is Conotoxin Au11.6 (Conus aulicus (Princely cone)).